The chain runs to 176 residues: dCTP deaminase (176 aa).

Residues 102-107 and Asp-118 contribute to the dCTP site; that span reads RSTFAR. Catalysis depends on Glu-128, which acts as the Proton donor/acceptor. DCTP-binding residues include Tyr-160 and Gln-167.

It belongs to the dCTP deaminase family. Homotrimer.

The catalysed reaction is dCTP + H2O + H(+) = dUTP + NH4(+). The protein operates within pyrimidine metabolism; dUMP biosynthesis; dUMP from dCTP (dUTP route): step 1/2. Its function is as follows. Catalyzes the deamination of dCTP to dUTP. The chain is dCTP deaminase from Hyperthermus butylicus (strain DSM 5456 / JCM 9403 / PLM1-5).